We begin with the raw amino-acid sequence, 288 residues long: Aquaporin PIP2-4 (288 aa).

Residues 1 to 24 (MAKDIEASGPEAGEFSAKDYTDPP) are disordered. 2 helical membrane-spanning segments follow: residues 42–62 (AVIA…ATVI) and 79–99 (CGGV…FILV). Residues 111–113 (NPA) carry the NPA 1 motif. 3 consecutive transmembrane segments (helical) span residues 130–150 (LLYI…VKGF), 172–192 (GTGL…VFSA), and 206–226 (VLAP…TIPI). Residues 232–234 (NPA) carry the NPA 2 motif. The chain crosses the membrane as a helical span at residues 254 to 274 (IFWVGPLIGAAIAAAYHQYVL).

It belongs to the MIP/aquaporin (TC 1.A.8) family. PIP (TC 1.A.8.11) subfamily. Homomers. May interact with PIP1-2 to form heteromers. In terms of tissue distribution, expressed in the root growing zone at 5-6 mm from the root tip.

The protein localises to the cell membrane. Water channel required to facilitate the transport of water across cell membrane. Active as homomers. Increased activity when heteromerization with PIP1-2. This is Aquaporin PIP2-4 (PIP2-4) from Zea mays (Maize).